An 828-amino-acid polypeptide reads, in one-letter code: Toll-like receptor 4 (828 aa).

Positions 1–23 (MMSASRLAGTLIPAMAFLSCVRP) are cleaved as a signal peptide. Residues 24–629 (ESWEPCVVPN…SLNITCQMNK (606 aa)) lie on the Extracellular side of the membrane. A disulfide bridge links C29 with C38. The N-linked (GlcNAc...) asparagine glycan is linked to N33. LRR repeat units lie at residues 53–74 (STKN…SFFS), 77–98 (ELQV…AYQS), 101–122 (HLST…AFSG), 125–146 (SLQK…PIGH), and 149–170 (TLKE…EYFS). N-linked (GlcNAc...) asparagine glycosylation occurs at N171. LRR repeat units lie at residues 174–195 (NLEH…DLQV), 203–223 (NLSL…AFKE), and 225–245 (RLHK…KTCI). N-linked (GlcNAc...) asparagine glycosylation is present at N203. A disulfide bridge connects residues C279 and C304. Residues N280 and N307 are each glycosylated (N-linked (GlcNAc...) asparagine). LRR repeat units lie at residues 372–392 (SLEF…CSQS), 398–420 (SLKY…LGLE), 421–442 (QLEH…SVFL), 446–454 (NLIYLDISH), 470–493 (SLKV…FTEL), 495–516 (NLTF…AFNS), 519–540 (SLQV…PYKC), and 543–563 (SLQV…QELQ). A disulfide bond links C388 and C389. N-linked (GlcNAc...) asparagine glycosylation is found at N495 and N524. N-linked (GlcNAc...) asparagine glycosylation is present at N573. The LRRCT domain maps to 577 to 627 (NDFACTCEHQSFLQWIKDQRQLLVEVERMECATPSDKQGMPVLSLNITCQM). 2 disulfide bridges follow: C581-C607 and C583-C625. N-linked (GlcNAc...) asparagine glycans are attached at residues N622 and N628. Residues 630–650 (TVIGVSVFSVLVVSVVAVLVY) traverse the membrane as a helical segment. The Cytoplasmic portion of the chain corresponds to 651 to 828 (KFYFHLMLLA…WNPEGTVGTG (178 aa)). Positions 670–813 (NTYDAFVIYS…IFWRRLRKAL (144 aa)) constitute a TIR domain.

Belongs to the Toll-like receptor family. In terms of assembly, belongs to the lipopolysaccharide (LPS) receptor, a multi-protein complex containing at least CD14, LY96 and TLR4. Binding to bacterial LPS leads to homodimerization. Interacts with LY96 via the extracellular domain. Interacts with MYD88 and TIRAP via their respective TIR domains. Interacts with TICAM2. Interacts with NOX4. Interacts with CNPY3 and HSP90B1; this interaction is required for proper folding in the endoplasmic reticulum. Interacts with MAP3K21; this interaction leads to negative regulation of TLR4 signaling. Interacts with CD36, following CD36 stimulation by oxLDL or amyloid-beta 42, and forms a heterodimer with TLR6. The trimeric complex is internalized and triggers inflammatory response. LYN kinase activity facilitates TLR4-TLR6 heterodimerization and signal initiation. Interacts with TICAM1 in response to LPS in a WDFY1-dependent manner. Interacts with WDFY1 in response to LPS. Interacts with SMPDL3B. Interacts with CEACAM1; upon lipopolysaccharide stimulation, forms a complex including TLR4 and the phosphorylated form of SYK and CEACAM1, which in turn, recruits PTPN6 that dephosphorylates SYK, reducing the production of reactive oxygen species (ROS) and lysosome disruption, which in turn, reduces the activity of the inflammasome. Interacts with RFTN1; the interaction occurs in response to lipopolysaccharide stimulation. Interacts with SCIMP; the interaction occurs in response to lipopolysaccharide stimulation and is enhanced by phosphorylation of SCIMP by LYN. This interaction facilitates the phosphorylation of TLR4 by LYN which elicits a selective cytokine response in macrophages. Interacts with TRAF3IP3. Interacts with TREM1; this interaction enhances TLR4-mediated inflammatory response. Interacts with ZG16B/PAUF. Interacts with CD82; this interaction inhibits TLR4-mediated signaling pathway. Phosphorylated on tyrosine residues by LYN after binding lipopolysaccharide. Post-translationally, ubiquitinated by RNF128 via 'Lys-28'-linked polyubiquitin chains, leading to proteasomal degradation.

Its subcellular location is the cell membrane. The protein localises to the early endosome. The protein resides in the cell projection. It is found in the ruffle. Transmembrane receptor that functions as a pattern recognition receptor recognizing pathogen- and damage-associated molecular patterns (PAMPs and DAMPs) to induce innate immune responses via downstream signaling pathways. At the plasma membrane, cooperates with LY96 to mediate the innate immune response to bacterial lipopolysaccharide (LPS). Also involved in LPS-independent inflammatory responses triggered by free fatty acids, such as palmitate, and Ni(2+). Mechanistically, acts via MYD88, TIRAP and TRAF6, leading to NF-kappa-B activation, cytokine secretion and the inflammatory response. Alternatively, CD14-mediated TLR4 internalization via endocytosis is associated with the initiation of a MYD88-independent signaling via the TICAM1-TBK1-IRF3 axis leading to type I interferon production. In addition to the secretion of proinflammatory cytokines, initiates the activation of NLRP3 inflammasome and formation of a positive feedback loop between autophagy and NF-kappa-B signaling cascade. In complex with TLR6, promotes inflammation in monocytes/macrophages by associating with TLR6 and the receptor CD86. Upon ligand binding, such as oxLDL or amyloid-beta 42, the TLR4:TLR6 complex is internalized and triggers inflammatory response, leading to NF-kappa-B-dependent production of CXCL1, CXCL2 and CCL9 cytokines, via MYD88 signaling pathway, and CCL5 cytokine, via TICAM1 signaling pathway. In myeloid dendritic cells, vesicular stomatitis virus glycoprotein G but not LPS promotes the activation of IRF7, leading to type I IFN production in a CD14-dependent manner. This chain is Toll-like receptor 4 (TLR4), found in Pongo pygmaeus (Bornean orangutan).